Reading from the N-terminus, the 468-residue chain is Glutamate--tRNA ligase (468 aa).

The 'HIGH' region signature appears at 11 to 21 (PSPTGFIHLGN). The 'KMSKS' region signature appears at 243 to 247 (KMSKR). Lys-246 serves as a coordination point for ATP.

Belongs to the class-I aminoacyl-tRNA synthetase family. Glutamate--tRNA ligase type 1 subfamily. As to quaternary structure, monomer.

The protein resides in the cytoplasm. The enzyme catalyses tRNA(Glu) + L-glutamate + ATP = L-glutamyl-tRNA(Glu) + AMP + diphosphate. Functionally, catalyzes the attachment of glutamate to tRNA(Glu) in a two-step reaction: glutamate is first activated by ATP to form Glu-AMP and then transferred to the acceptor end of tRNA(Glu). This is Glutamate--tRNA ligase from Delftia acidovorans (strain DSM 14801 / SPH-1).